Here is a 253-residue protein sequence, read N- to C-terminus: Putative B3 domain-containing protein Os03g0619850 (253 aa).

The TF-B3 DNA-binding region spans 26–119; that stretch reads MSCFLIRMTT…CFEVMILDSD (94 aa). Disordered stretches follow at residues 126 to 150 and 230 to 253; these read LKSN…AGPP and HRDA…EQDS. Residues 230-239 show a composition bias toward basic and acidic residues; it reads HRDADQERQM.

The protein resides in the nucleus. The chain is Putative B3 domain-containing protein Os03g0619850 from Oryza sativa subsp. japonica (Rice).